We begin with the raw amino-acid sequence, 412 residues long: 43 kDa receptor-associated protein of the synapse (412 aa).

The N-myristoyl glycine moiety is linked to residue Gly2. TPR repeat units follow at residues 6-39 (TKQQ…SSDL), 83-116 (LESY…PGTR), 123-156 (GQVS…AHNN), 163-196 (CRVC…VNNY), 206-239 (AMSQ…ALQH), 246-279 (ALCL…MTEI), and 286-319 (VQAL…AEEV). Tyr196 is subject to Phosphotyrosine. The segment at 363-403 (CGLCGESIGEKNSRLQALPCSHIFHLRCLQNNGTRSCPNCR) adopts an RING-type zinc-finger fold. Ser405 carries the post-translational modification Phosphoserine.

This sequence belongs to the RAPsyn family. Ubiquitinated by the BCR(KLHL8) complex, leading to its degradation.

It is found in the cell membrane. Its subcellular location is the postsynaptic cell membrane. It localises to the cytoplasm. The protein resides in the cytoskeleton. Functionally, postsynaptic protein required for clustering of nicotinic acetylcholine receptors (nAChRs) at the neuromuscular junction. It may link the receptor to the underlying postsynaptic cytoskeleton, possibly by direct association with actin or spectrin. In Homo sapiens (Human), this protein is 43 kDa receptor-associated protein of the synapse (RAPSN).